A 545-amino-acid polypeptide reads, in one-letter code: Glucose-6-phosphate isomerase (545 aa).

Glu351 (proton donor) is an active-site residue. Active-site residues include His382 and Lys510.

Belongs to the GPI family.

It localises to the cytoplasm. The catalysed reaction is alpha-D-glucose 6-phosphate = beta-D-fructose 6-phosphate. The protein operates within carbohydrate biosynthesis; gluconeogenesis. It participates in carbohydrate degradation; glycolysis; D-glyceraldehyde 3-phosphate and glycerone phosphate from D-glucose: step 2/4. Functionally, catalyzes the reversible isomerization of glucose-6-phosphate to fructose-6-phosphate. This chain is Glucose-6-phosphate isomerase, found in Shewanella halifaxensis (strain HAW-EB4).